Reading from the N-terminus, the 1179-residue chain is Integrin alpha-7 (1179 aa).

Positions 1–33 (MARIPRCDFLRPPGIYYLITSLLAGLFLPPAIA) are cleaved as a signal peptide. The Extracellular segment spans residues 34-1076 (FNLDVMGAIR…YLDPMAVVVE (1043 aa)). FG-GAP repeat units lie at residues 38–103 (VMGA…ETDC), 110–175 (RGAN…IRDE), 185–238 (EGRP…SPDL), 292–349 (DRLT…ATRL), 350–411 (IPEV…HWAD), 412–467 (ISPL…GVVV), and 471–530 (QVLE…IDPR). The N-linked (GlcNAc...) asparagine glycan is linked to asparagine 86. Disulfide bonds link cysteine 94-cysteine 103, cysteine 140-cysteine 163, and cysteine 184-cysteine 197. Ca(2+)-binding residues include aspartate 372, asparagine 374, aspartate 376, aspartate 380, aspartate 434, asparagine 436, aspartate 438, aspartate 442, aspartate 492, aspartate 494, asparagine 496, tyrosine 498, and aspartate 500. Intrachain disulfides connect cysteine 539-cysteine 546, cysteine 552-cysteine 615, cysteine 681-cysteine 687, cysteine 781-cysteine 792, cysteine 939-cysteine 993, and cysteine 999-cysteine 1004. N-linked (GlcNAc...) asparagine glycosylation is present at asparagine 784. Basic and acidic residues predominate over residues 952 to 961 (SRDRRRRELG). The tract at residues 952 to 978 (SRDRRRRELGQPEPQEPPEKVEPSTSW) is disordered. N-linked (GlcNAc...) asparagine glycosylation is present at asparagine 988. Residues asparagine 1023 and asparagine 1043 are each glycosylated (N-linked (GlcNAc...) asparagine). A helical membrane pass occupies residues 1077–1102 (GVPWWVILLGVLAGLLVLALLVLLLW). Residues 1103–1179 (KLGFFKRAKH…PDGHPVPATA (77 aa)) lie on the Cytoplasmic side of the membrane. The GFFKR motif signature appears at 1105–1109 (GFFKR). Positions 1134-1153 (KEEKTGTIQRSNWGNSQWEG) are disordered. The span at 1139-1152 (GTIQRSNWGNSQWE) shows a compositional bias: polar residues. Repeat copies occupy residues 1155–1158 (DAHP), 1163–1166 (DWHP), and 1171–1174 (DGHP). A 3 X 4 AA repeats of D-X-H-P region spans residues 1155-1174 (DAHPILAADWHPELGPDGHP).

It belongs to the integrin alpha chain family. As to quaternary structure, heterodimer of an alpha and a beta subunit. The alpha subunit is composed of a heavy and a light chain linked by a disulfide bond. Alpha-7 associates with beta-1. Interacts with COMP. Interacts (via C-terminus intracellular tail region) with CIB1; the interaction is stabilized/increased in a calcium- and magnesium-dependent manner. ADP-ribosylated on at least two sites of the extracellular domain in skeletal myotubes (in vitro). In terms of processing, no proteolytic cleavage to produce the 70 kDa form is seen due to the presence of a Gly instead of an arginine residue at position 647. As to expression, isoforms containing segment X2 are found in adult heart, lung and skeletal muscle. Isoforms containing segment X1 are expressed in adult heart, lung and in proliferating skeletal myoblasts but not in adult skeletal muscle. Isoforms containing segment a are exclusively found in skeletal muscle. Isoforms containing segment B are widely expressed. In muscle fibers isoforms containing segment A and B are expressed at myotendinous and neuromuscular junctions; isoforms containing segment C are expressed at neuromuscular junctions and at extrasynaptic sites.

It is found in the membrane. In terms of biological role, integrin alpha-7/beta-1 is the primary laminin receptor on skeletal myoblasts and adult myofibers. During myogenic differentiation, it may induce changes in the shape and mobility of myoblasts, and facilitate their localization at laminin-rich sites of secondary fiber formation. Involved in the maintenance of the myofibers cytoarchitecture as well as for their anchorage, viability and functional integrity. Mice carrying a ITGA7 null allele are viable and fertile, but show progressive muscular dystrophy starting soon after birth, but with a distinct variability in different muscle types. Required to promote contractile phenotype acquisition in differentiated airway smooth muscle (ASM) cells. Acts as a Schwann cell receptor for laminin-2. Acts as a receptor of COMP and mediates its effect on vascular smooth muscle cells (VSMCs) maturation. The sequence is that of Integrin alpha-7 (Itga7) from Mus musculus (Mouse).